The primary structure comprises 172 residues: Large ribosomal subunit protein bL17 (172 aa).

The interval 123 to 172 (ATGSKRAQTEEAASQEPAAEAGKQPAEGATSVQTAEAADASQAEGEAEEK) is disordered. Residues 132 to 143 (EEAASQEPAAEA) show a composition bias toward low complexity.

The protein belongs to the bacterial ribosomal protein bL17 family. Part of the 50S ribosomal subunit. Contacts protein L32.

This is Large ribosomal subunit protein bL17 from Thermobifida fusca (strain YX).